We begin with the raw amino-acid sequence, 481 residues long: MSIQVHDTLTAQKRELVPLEPGKLRLYVCGPTVYDYSHLGHARCYVVWDVVVRHLRARGLEVRFVRNFTDVDDKIIQRANERGEDPIALASRFADAFHEDMDALGNLRPDVEPRVSGHIPEIVALIARLVERGFAYAPGNGDVYYAVRKFPEYGRLSKRNLDDLIAGARVEPGEAKRDPLDFALWKAAKPGEPAWESPWGKGRPGWHIECSAMTQKHLGAPIDLHAGGKDLVFPHHTNEIAQSVAATSDGLHAEDFARYWMHNGFVQIDDEKMSKSLGNFFTIRDVLARFDGEALRFFLLGTHYRRDFNFSDQVLAEAERRLSALYETVEKAERLGAGAAPAAEPAFVERARAALDDDFNTPQVLGIVAEAFTEANALADRKGKKSSEEKARLAAFARGARAVGAVLGILDRPPAQALTAIRDRAAARRGIDGGEVERSIAERAAARAAKDFARSDAIRDALLARGVVLMDGPQGTTWKVE.

Zn(2+) is bound at residue Cys-29. Residues 31 to 41 (PTVYDYSHLGH) carry the 'HIGH' region motif. 3 residues coordinate Zn(2+): Cys-210, His-235, and Glu-239. Residues 272-276 (KMSKS) carry the 'KMSKS' region motif. ATP is bound at residue Lys-275.

Belongs to the class-I aminoacyl-tRNA synthetase family. As to quaternary structure, monomer. Zn(2+) serves as cofactor.

The protein resides in the cytoplasm. It carries out the reaction tRNA(Cys) + L-cysteine + ATP = L-cysteinyl-tRNA(Cys) + AMP + diphosphate. The polypeptide is Cysteine--tRNA ligase (Anaeromyxobacter dehalogenans (strain 2CP-1 / ATCC BAA-258)).